The chain runs to 265 residues: Bidirectional sugar transporter SWEET7b (265 aa).

Over 1–9 (MVSPDLIRN) the chain is Extracellular. A helical membrane pass occupies residues 10–30 (MVGIVGNIISFGLFLSPVPTF). The MtN3/slv 1 domain maps to 10–97 (MVGIVGNIIS…TIFFLFSDKK (88 aa)). The Cytoplasmic segment spans residues 31 to 45 (YRIIKNKDVQDFKAD). Residues 46–66 (PYLATLLNCMLWVFYGLPIVH) traverse the membrane as a helical segment. Residues 67–69 (PNS) are Extracellular-facing. A helical membrane pass occupies residues 70 to 90 (ILVVTINGIGLVIEAVYLTIF). Over 91–101 (FLFSDKKNKKK) the chain is Cytoplasmic. The helical transmembrane segment at 102 to 122 (MGVVLATEALFMAAVVLGVLL) threads the bilayer. Residues 123–131 (GAHTHQRRS) lie on the Extracellular side of the membrane. A helical membrane pass occupies residues 132 to 152 (LIVGILCVIFGTIMYSSPLTI). The 83-residue stretch at 133–215 (IVGILCVIFG…QLILYAIYYR (83 aa)) folds into the MtN3/slv 2 domain. Residues 153 to 165 (MSQVVKTKSVEYM) lie on the Cytoplasmic side of the membrane. Residues 166 to 186 (PLLLSVVSFLNGLCWTSYALI) form a helical membrane-spanning segment. At 187-189 (RLD) the chain is on the extracellular side. A helical membrane pass occupies residues 190 to 210 (IFITIPNGLGVLFALMQLILY). Residues 211–265 (AIYYRTIPKKQDKNLELPTVAPVAKDTSIVTPVSKDDDVDGGNASHVTINITIEL) are Cytoplasmic-facing.

Belongs to the SWEET sugar transporter family. As to quaternary structure, forms homooligomers and/or heterooligomers.

Its subcellular location is the cell membrane. In terms of biological role, mediates both low-affinity uptake and efflux of sugar across the plasma membrane. The chain is Bidirectional sugar transporter SWEET7b (SWEET7B) from Oryza sativa subsp. japonica (Rice).